Reading from the N-terminus, the 257-residue chain is 4-hydroxy-tetrahydrodipicolinate reductase (257 aa).

NAD(+) is bound by residues 11–16 and E37; that span reads GANGRM. NADP(+) is bound at residue R38. NAD(+) is bound by residues 86–88 and 110–113; these read GST and SGNY. The Proton donor/acceptor role is filled by H144. Residue H145 coordinates (S)-2,3,4,5-tetrahydrodipicolinate. K148 serves as the catalytic Proton donor. Position 154–155 (154–155) interacts with (S)-2,3,4,5-tetrahydrodipicolinate; sequence GT.

It belongs to the DapB family.

It localises to the cytoplasm. It carries out the reaction (S)-2,3,4,5-tetrahydrodipicolinate + NAD(+) + H2O = (2S,4S)-4-hydroxy-2,3,4,5-tetrahydrodipicolinate + NADH + H(+). The enzyme catalyses (S)-2,3,4,5-tetrahydrodipicolinate + NADP(+) + H2O = (2S,4S)-4-hydroxy-2,3,4,5-tetrahydrodipicolinate + NADPH + H(+). It functions in the pathway amino-acid biosynthesis; L-lysine biosynthesis via DAP pathway; (S)-tetrahydrodipicolinate from L-aspartate: step 4/4. Catalyzes the conversion of 4-hydroxy-tetrahydrodipicolinate (HTPA) to tetrahydrodipicolinate. This is 4-hydroxy-tetrahydrodipicolinate reductase from Caulobacter vibrioides (strain ATCC 19089 / CIP 103742 / CB 15) (Caulobacter crescentus).